Here is a 193-residue protein sequence, read N- to C-terminus: Xanthine phosphoribosyltransferase (193 aa).

Positions 20 and 27 each coordinate xanthine. 128-132 (ANGQA) contributes to the 5-phospho-alpha-D-ribose 1-diphosphate binding site. Lysine 156 provides a ligand contact to xanthine.

Belongs to the purine/pyrimidine phosphoribosyltransferase family. Xpt subfamily. As to quaternary structure, homodimer.

It is found in the cytoplasm. The catalysed reaction is XMP + diphosphate = xanthine + 5-phospho-alpha-D-ribose 1-diphosphate. Its pathway is purine metabolism; XMP biosynthesis via salvage pathway; XMP from xanthine: step 1/1. Converts the preformed base xanthine, a product of nucleic acid breakdown, to xanthosine 5'-monophosphate (XMP), so it can be reused for RNA or DNA synthesis. This Streptococcus pneumoniae serotype 4 (strain ATCC BAA-334 / TIGR4) protein is Xanthine phosphoribosyltransferase.